The following is a 541-amino-acid chain: Membrane protein insertase YidC (541 aa).

5 consecutive transmembrane segments (helical) span residues 7–27 (LLFM…QVDY), 345–365 (LVQN…AVLY), 415–435 (LGGC…YWTF), 453–473 (LSAQ…MFLL), and 492–512 (FMPL…VLYW).

Belongs to the OXA1/ALB3/YidC family. Type 1 subfamily. Interacts with the Sec translocase complex via SecD. Specifically interacts with transmembrane segments of nascent integral membrane proteins during membrane integration.

Its subcellular location is the cell inner membrane. Functionally, required for the insertion and/or proper folding and/or complex formation of integral membrane proteins into the membrane. Involved in integration of membrane proteins that insert both dependently and independently of the Sec translocase complex, as well as at least some lipoproteins. Aids folding of multispanning membrane proteins. This is Membrane protein insertase YidC from Histophilus somni (strain 2336) (Haemophilus somnus).